The chain runs to 456 residues: MNSLKISDNEYALIEHPGFANNKDAFFQTLGGVQSIQKACQTSFQNPKQALLELNLRPKDKYHHPVQARVQSRNDLLVTIKKMDNSVQNVSRIRQVFLFRDMADFQYSTQNSPFVQKLDSTLRVLDYNAINKFSIDLTPVQRKHVDMPPPPVFSQTSLPMSYNFLQNPLVGRVRLPNGKTTIVNLKGQCRVWIITTNMGVESVPTCRHSKLGEPSKTIQEVIEALKPLFEKRPVWTRRALLNHLDPSYTHYLKFALPYLSYLWTSGPFRDTYTRFGYDPRKDSNAAAYQALFFKLKLNGKHKGTKTHVFDGKTLFPTNRVYQVCDIVDPTIAPLLKDTQLRSECHRDTGWYRSGRYYKVRDLMREKLFALIEGEMPSEVAVNMILNAEEVEESDRYSNFDEQDNTDLNDTVRGLNTSATDDRINDLMRNLMKRSQEHEGFEDLEEIDDDYDDIFGD.

2 disordered regions span residues 394-416 and 437-456; these read DRYS…GLNT and HEGF…IFGD. Positions 407 to 416 are enriched in polar residues; sequence LNDTVRGLNT. Acidic residues predominate over residues 441-456; it reads EDLEEIDDDYDDIFGD.

As to quaternary structure, component of the TFIIIC complex including sfc1, sfc3, sfc4, sfc6 and sfc7. The subunits are organized in two globular domains, tauA and tauB, connected by a proteolysis-sensitive and flexible linker. Interacts with sfc3, sfc4 and sfc6. In terms of processing, phosphorylated.

The protein localises to the nucleus. TFIIIC mediates tRNA and 5S RNA gene activation by binding to intragenic promoter elements. Upstream of the transcription start site, TFIIIC assembles the initiation complex TFIIIB-TFIIIC-tDNA, which is sufficient for RNA polymerase III recruitment and function. Part of the tauA domain of TFIIIC that binds boxA DNA promoter sites of tRNA and similar genes. Participates in the interconnection of tauA with tauB via its contacts with sfc3 and sfc6. Serves as a scaffold critical for tauA-DNA spatial configuration and tauB-DNA stability. Localizes to chromatin insulator sequence without recruiting RNA polymerase III and plays a role in nuclear organization. The protein is Transcription factor tau subunit sfc1 (sfc1) of Schizosaccharomyces pombe (strain 972 / ATCC 24843) (Fission yeast).